The primary structure comprises 515 residues: Fatty acyl-CoA reductase 1 (515 aa).

At 1–465 (MVSIPEYYEG…ARKHLNKLRN (465 aa)) the chain is on the cytoplasmic side. The tract at residues 451-507 (SGLPAARKHLNKLRNIRYGFNTILVILIWRIFIARSQMARNIWYFVVSLCYKFLSYF) is necessary and sufficient for PEX19-mediated localization into peroxisome membrane. Residues 466-483 (IRYGFNTILVILIWRIFI) form a helical membrane-spanning segment. Over 484 to 515 (ARSQMARNIWYFVVSLCYKFLSYFRASSTMRY) the chain is Peroxisomal.

This sequence belongs to the fatty acyl-CoA reductase family. In terms of assembly, interacts with PEX19; PEX19 mediates the targeting of FAR1 to peroxisomes.

It localises to the peroxisome membrane. The catalysed reaction is a long-chain fatty acyl-CoA + 2 NADPH + 2 H(+) = a long-chain primary fatty alcohol + 2 NADP(+) + CoA. It catalyses the reaction hexadecanoyl-CoA + 2 NADPH + 2 H(+) = hexadecan-1-ol + 2 NADP(+) + CoA. It carries out the reaction octadecanoyl-CoA + 2 NADPH + 2 H(+) = octadecan-1-ol + 2 NADP(+) + CoA. The enzyme catalyses eicosanoyl-CoA + 2 NADPH + 2 H(+) = eicosan-1-ol + 2 NADP(+) + CoA. The catalysed reaction is (9Z)-octadecenoyl-CoA + 2 NADPH + 2 H(+) = (9Z)-octadecen-1-ol + 2 NADP(+) + CoA. It catalyses the reaction (9Z,12Z)-octadecadienoyl-CoA + 2 NADPH + 2 H(+) = (9Z,12Z)-octadecadien-1-ol + 2 NADP(+) + CoA. It carries out the reaction 16-methylheptadecanoyl-CoA + 2 NADPH + 2 H(+) = 16-methylheptadecan-1-ol + 2 NADP(+) + CoA. The enzyme catalyses 18-methylnonadecanoyl-CoA + 2 NADPH + 2 H(+) = 18-methylnonadecan-1-ol + 2 NADP(+) + CoA. Functionally, catalyzes the reduction of saturated and unsaturated C16 or C18 fatty acyl-CoA to fatty alcohols. It plays an essential role in the production of ether lipids/plasmalogens which synthesis requires fatty alcohols. In parallel, it is also required for wax monoesters production since fatty alcohols also constitute a substrate for their synthesis. This chain is Fatty acyl-CoA reductase 1, found in Homo sapiens (Human).